Consider the following 1059-residue polypeptide: Endo-1,4-beta-xylanase A (1059 aa).

The N-terminal stretch at 1 to 30 is a signal peptide; that stretch reads MQVRKRRGLLDVSTAVLVGILAGFLGVVLA. The tract at residues 47–199 is A-1; the sequence is SSLETVLALS…LDKVQVLAPK (153 aa). An A-2 region spans residues 200 to 354; that stretch reads ESGPKVIYET…DDVKIVDTTS (155 aa). The 329-residue stretch at 364-692 folds into the GH10 domain; it reads EKEIPALKEV…KLAYWAIVAP (329 aa). E502 functions as the Proton donor in the catalytic mechanism. Residue E608 is the Nucleophile of the active site. CBM-cenC domains are found at residues 700–870 and 871–1059; these read KESR…LEGI and MVAT…RLIK.

Belongs to the glycosyl hydrolase 10 (cellulase F) family.

The catalysed reaction is Endohydrolysis of (1-&gt;4)-beta-D-xylosidic linkages in xylans.. This is Endo-1,4-beta-xylanase A (xynA) from Thermotoga maritima (strain ATCC 43589 / DSM 3109 / JCM 10099 / NBRC 100826 / MSB8).